The sequence spans 523 residues: Volkensin (523 aa).

Residues tyrosine 74, tyrosine 113, glutamate 162, and arginine 165 contribute to the active site. Residue 111-113 (GGY) participates in AMP binding. Cystine bridges form between cysteine 245-cysteine 269 and cysteine 285-cysteine 304. A propeptide spans 251–265 (QSDSPLVIRSFVDRN) (linker peptide). The 128-residue stretch at 270 to 397 (PSGETTAFIV…YAASQAWRVT (128 aa)) folds into the Ricin B-type lectin 1 domain. Residues 287–291 (DVKVE), glutamine 300, lysine 305, and asparagine 311 contribute to the a carbohydrate site. Cysteine 328 and cysteine 343 are oxidised to a cystine. A carbohydrate contacts are provided by asparagine 358 and asparagine 398. N-linked (GlcNAc...) asparagine glycans are attached at residues asparagine 358 and asparagine 398. Positions 400–523 (TVPTVTTIVG…HGNSNQQWFL (124 aa)) constitute a Ricin B-type lectin 2 domain. Intrachain disulfides connect cysteine 414/cysteine 427 and cysteine 453/cysteine 471.

It in the N-terminal section; belongs to the ribosome-inactivating protein family. Type 2 RIP subfamily. As to quaternary structure, disulfide-linked dimer of A and B chains. Post-translationally, N-glycosylated. Contains mannose and galactose. Expressed in roots (at protein level). Expressed in seeds (at protein level).

It catalyses the reaction Endohydrolysis of the N-glycosidic bond at one specific adenosine on the 28S rRNA.. With respect to regulation, hemagglutinating activity is inhibited by galactose and structurally related sugars. In terms of biological role, has N-glycosidase activity and is responsible for inhibiting protein synthesis through the catalytic inactivation of 60S ribosomal subunits by removing a specific adenine of 28S rRNA. Inhibits GTP-dependent binding of EF2 (elongation factor 2) to ribosomes. Functionally, binds to cell receptors and probably facilitates the entry into the cell of the A chain. Also acts as a galactose-specific lectin responsible for cell agglutination. In Adenia volkensii (Kilyambiti plant), this protein is Volkensin.